The sequence spans 242 residues: Probable pectate lyase D (242 aa).

The signal sequence occupies residues methionine 1–alanine 17. Asparagine 216 is a glycosylation site (N-linked (GlcNAc...) asparagine). Residues aspartate 217–cysteine 242 form a disordered region.

The protein belongs to the polysaccharide lyase 3 family. Requires Ca(2+) as cofactor.

It is found in the secreted. It catalyses the reaction Eliminative cleavage of (1-&gt;4)-alpha-D-galacturonan to give oligosaccharides with 4-deoxy-alpha-D-galact-4-enuronosyl groups at their non-reducing ends.. Functionally, pectinolytic enzyme consist of four classes of enzymes: pectin lyase, polygalacturonase, pectin methylesterase and rhamnogalacturonase. Among pectinolytic enzymes, pectin lyase is the most important in depolymerization of pectin, since it cleaves internal glycosidic bonds of highly methylated pectins. Favors pectate, the anion, over pectin, the methyl ester. The protein is Probable pectate lyase D (plyD) of Aspergillus fumigatus (strain CBS 144.89 / FGSC A1163 / CEA10) (Neosartorya fumigata).